The chain runs to 1373 residues: DNA-directed RNA polymerase subunit beta'' (1373 aa).

Zn(2+) is bound by residues Cys-224, Cys-296, Cys-303, and Cys-306.

The protein belongs to the RNA polymerase beta' chain family. RpoC2 subfamily. As to quaternary structure, in plastids the minimal PEP RNA polymerase catalytic core is composed of four subunits: alpha, beta, beta', and beta''. When a (nuclear-encoded) sigma factor is associated with the core the holoenzyme is formed, which can initiate transcription. Requires Zn(2+) as cofactor.

It localises to the plastid. It is found in the chloroplast. The enzyme catalyses RNA(n) + a ribonucleoside 5'-triphosphate = RNA(n+1) + diphosphate. Functionally, DNA-dependent RNA polymerase catalyzes the transcription of DNA into RNA using the four ribonucleoside triphosphates as substrates. The sequence is that of DNA-directed RNA polymerase subunit beta'' from Amborella trichopoda.